The primary structure comprises 564 residues: MNHDQAVLNRIWCETLFEELYRFGVRDVCVAPGSRSTPLALEANAHTRLKLHTHFDERGLGFLALGLAKASQRPVAVVVTSGTAVANLLPAVAEAGLTGEKLVLLTADRPIELVGCGANQAIAQQGIFSNHVCASLNLPSPNTQTSLNWLLTSVDQVLHQQAVSGHAVHINCPFPEPLYSNAPKSIYQSYIDTVDVWRAEGGIYSNKQMPLPMPPSLAEIEQRKGVVVIGSVTLQEAKQAHQFGAQMGWPVLCDPQSGTTSDWSGFDIWLQNPAARAQLSQCDLIIQFGRRLVSKRLHQWLEQQVQAGCDYWYVSPDFERDNQSHLPQQHFVCSIAAWLNVVTNREVQPVAWANELPRFSAEVNKQAREIAQSSLCEMMIALHLSSLVGSADLFLGNSLFVRMVDMVGQLHGVETFTNRGASGIDGLFATASGVQRARSNPMLLMIGDTSALYDLNSLALYSHQETPVVIVVTNNDGGAIFDLLPVPPQQKQALYQMPHGYRFEFAAKQFGLDYVCPTSMTELTERIVGHFAHGCGALLVEVNTPPNQASQHIKQLADHVRSLV.

Belongs to the TPP enzyme family. MenD subfamily. Homodimer. The cofactor is Mg(2+). Mn(2+) is required as a cofactor. Requires thiamine diphosphate as cofactor.

The catalysed reaction is isochorismate + 2-oxoglutarate + H(+) = 5-enolpyruvoyl-6-hydroxy-2-succinyl-cyclohex-3-ene-1-carboxylate + CO2. Its pathway is quinol/quinone metabolism; 1,4-dihydroxy-2-naphthoate biosynthesis; 1,4-dihydroxy-2-naphthoate from chorismate: step 2/7. The protein operates within quinol/quinone metabolism; menaquinone biosynthesis. In terms of biological role, catalyzes the thiamine diphosphate-dependent decarboxylation of 2-oxoglutarate and the subsequent addition of the resulting succinic semialdehyde-thiamine pyrophosphate anion to isochorismate to yield 2-succinyl-5-enolpyruvyl-6-hydroxy-3-cyclohexene-1-carboxylate (SEPHCHC). The protein is 2-succinyl-5-enolpyruvyl-6-hydroxy-3-cyclohexene-1-carboxylate synthase of Vibrio vulnificus (strain CMCP6).